The sequence spans 126 residues: Cell cycle protein GpsB (126 aa).

Residues 35-72 are a coiled coil; sequence LDLVIKDYQTYQENIDRLTADNTRLFNKVEELNRQLSA.

Belongs to the GpsB family. Forms polymers through the coiled coil domains. Interacts with PBP1, MreC and EzrA.

It localises to the cytoplasm. Divisome component that associates with the complex late in its assembly, after the Z-ring is formed, and is dependent on DivIC and PBP2B for its recruitment to the divisome. Together with EzrA, is a key component of the system that regulates PBP1 localization during cell cycle progression. Its main role could be the removal of PBP1 from the cell pole after pole maturation is completed. Also contributes to the recruitment of PBP1 to the division complex. Not essential for septum formation. The chain is Cell cycle protein GpsB from Latilactobacillus sakei subsp. sakei (strain 23K) (Lactobacillus sakei subsp. sakei).